Consider the following 188-residue polypeptide: UPF0232 protein RHA1_ro03670 (188 aa).

Disordered regions lie at residues Met1 to Lys20, Glu31 to Gly78, and Pro166 to Gly188. Residues Pro7–Glu16 show a composition bias toward low complexity.

Belongs to the UPF0232 family.

The protein is UPF0232 protein RHA1_ro03670 of Rhodococcus jostii (strain RHA1).